A 207-amino-acid chain; its full sequence is uncharacterized protein (207 aa).

In terms of domain architecture, YrdC-like spans 14–201 (ARLINQAVEI…SPVILREGSG (188 aa)).

Belongs to the SUA5 family.

This is an uncharacterized protein from Haemophilus influenzae (strain ATCC 51907 / DSM 11121 / KW20 / Rd).